The following is an 811-amino-acid chain: E3 ubiquitin-protein ligase RNF10 (811 aa).

Residues 1-10 (MPLSSPNAAA) are compositionally biased toward polar residues. A disordered region spans residues 1–119 (MPLSSPNAAA…SFNGGRRDEV (119 aa)). The residue at position 5 (serine 5) is a Phosphoserine. Composition is skewed to low complexity over residues 18–31 (NSGSNSSSASSGSS), 78–90 (NNQSRRSSSQKSK), and 104–113 (SKLFSSSFNG). Residues 101-185 (GGSSKLFSSS…FNKELFLQAN (85 aa)) are interaction with MEOX2. Phosphoserine occurs at positions 110 and 128. The RING-type zinc finger occupies 225 to 267 (CPICLYPPTAAKITRCGHIFCWACILHYLSLSEKTWSKCPICY). The segment covering 653–662 (DSALGPTSTE) has biased composition (polar residues). Disordered stretches follow at residues 653–672 (DSALGPTSTEGHGALSISPL), 724–761 (DVWPKTAPKKDENSLVPPAPVDSDGESDNSDRVPVPSF), and 776–811 (LDTPATSDPLSEEKGGKKRKKQKQKLLFSTSVVHTK). Over residues 724 to 736 (DVWPKTAPKKDEN) the composition is skewed to basic and acidic residues. The segment covering 802 to 811 (LFSTSVVHTK) has biased composition (polar residues).

Belongs to the RNF10 family. Interacts with MEOX2.

It is found in the cytoplasm. It localises to the nucleus. It catalyses the reaction S-ubiquitinyl-[E2 ubiquitin-conjugating enzyme]-L-cysteine + [acceptor protein]-L-lysine = [E2 ubiquitin-conjugating enzyme]-L-cysteine + N(6)-ubiquitinyl-[acceptor protein]-L-lysine.. It participates in protein modification; protein ubiquitination. E3 ubiquitin-protein ligase that catalyzes monoubiquitination of 40S ribosomal proteins RPS2/us5 and RPS3/us3 in response to ribosome stalling. Part of a ribosome quality control that takes place when ribosomes have stalled during translation initiation (iRQC): RNF10 acts by mediating monoubiquitination of RPS2/us5 and RPS3/us3, promoting their degradation by the proteasome. Also promotes ubiquitination of 40S ribosomal proteins in response to ribosome stalling during translation elongation. The action of RNF10 in iRQC is counteracted by USP10. May also act as a transcriptional factor involved in the regulation of MAG (Myelin-associated glycoprotein) expression. Acts as a regulator of Schwann cell differentiation and myelination. This Homo sapiens (Human) protein is E3 ubiquitin-protein ligase RNF10.